The sequence spans 568 residues: C6 finger domain transcription factor BOA13 (568 aa).

The segment at residues 14-41 is a DNA-binding region (zn(2)-C6 fungal-type); it reads CNECHASKVRCSGERTGCRRCVYNQQKC. Disordered regions lie at residues 92–114, 207–278, and 467–490; these read EANG…EGIT, ATSS…HHNH, and RSRS…FSNP. Residues 242 to 259 show a composition bias toward basic and acidic residues; it reads HSDLSEKQAQHAQNDLRW. Residues 260–274 show a composition bias toward polar residues; sequence RSQSQSYKRPTISTQ. A compositionally biased stretch (low complexity) spans 470-490; it reads SLSTPSPRNTPSTSNSPFSNP.

The protein localises to the nucleus. Functionally, transcription factor that probably regulates the gene clusters that mediates the biosynthesis of botcinin acid and its botcinin derivatives, acetate-derived polyketides that contribute to virulence when combined with the sesquiterpene botrydial. Botcinin acid and its derivatives have been shown to induce chlorosis and necrosis during host plant infection, but also have antifungal activities. The chain is C6 finger domain transcription factor BOA13 from Botryotinia fuckeliana (strain B05.10) (Noble rot fungus).